The following is a 408-amino-acid chain: Protein BTN1 (408 aa).

An N-terminal signal peptide occupies residues 1 to 30 (MSDKSHQIYCYFWLFGLINNVLYVVILSAA). A run of 7 helical transmembrane segments spans residues 42 to 62 (LVLL…PFFI), 80 to 100 (LGMF…ISFA), 128 to 148 (SGTG…TSIF), 150 to 170 (VPVK…LFYF), 238 to 258 (TVYL…LFPI), 323 to 343 (WFYV…EGFL), and 369 to 389 (GAVS…GLGL).

The protein belongs to the battenin family.

It is found in the vacuole membrane. Functionally, plays a role in vacuolar arginine transport. Involved in pH homeostasis. May be involved in ion homeostasis together with IST2. Not necessary for mitochondrial function or ATP synthase degradation. This chain is Protein BTN1 (YHC3), found in Saccharomyces cerevisiae (strain ATCC 204508 / S288c) (Baker's yeast).